The primary structure comprises 201 residues: LexA repressor (201 aa).

Residues 28-48 (LREIAAKLGISGTLGVMKHLE) constitute a DNA-binding region (H-T-H motif). Active-site for autocatalytic cleavage activity residues include Ser120 and Lys157.

It belongs to the peptidase S24 family. As to quaternary structure, homodimer.

The enzyme catalyses Hydrolysis of Ala-|-Gly bond in repressor LexA.. In terms of biological role, represses a number of genes involved in the response to DNA damage (SOS response), including recA and lexA. In the presence of single-stranded DNA, RecA interacts with LexA causing an autocatalytic cleavage which disrupts the DNA-binding part of LexA, leading to derepression of the SOS regulon and eventually DNA repair. The chain is LexA repressor from Geobacter sp. (strain M21).